Here is a 94-residue protein sequence, read N- to C-terminus: Acylphosphatase (94 aa).

One can recognise an Acylphosphatase-like domain in the interval 8 to 94; that stretch reads HIRAWVSGKV…ETPPLGFEVC (87 aa). Active-site residues include arginine 23 and asparagine 41.

The protein belongs to the acylphosphatase family.

It carries out the reaction an acyl phosphate + H2O = a carboxylate + phosphate + H(+). The polypeptide is Acylphosphatase (acyP) (Hahella chejuensis (strain KCTC 2396)).